Here is a 374-residue protein sequence, read N- to C-terminus: tRNA-specific 2-thiouridylase MnmA (374 aa).

ATP-binding positions include 10–17 and Leu-36; that span reads AMSGGVDS. The active-site Nucleophile is Cys-111. Residues Cys-111 and Cys-209 are joined by a disulfide bond. Gly-135 is an ATP binding site. The segment at 159 to 161 is interaction with tRNA; sequence KDQ. Residue Cys-209 is the Cysteine persulfide intermediate of the active site.

This sequence belongs to the MnmA/TRMU family.

The protein resides in the cytoplasm. The enzyme catalyses S-sulfanyl-L-cysteinyl-[protein] + uridine(34) in tRNA + AH2 + ATP = 2-thiouridine(34) in tRNA + L-cysteinyl-[protein] + A + AMP + diphosphate + H(+). Its function is as follows. Catalyzes the 2-thiolation of uridine at the wobble position (U34) of tRNA, leading to the formation of s(2)U34. The protein is tRNA-specific 2-thiouridylase MnmA of Acidobacterium capsulatum (strain ATCC 51196 / DSM 11244 / BCRC 80197 / JCM 7670 / NBRC 15755 / NCIMB 13165 / 161).